A 131-amino-acid polypeptide reads, in one-letter code: Profilin (131 aa).

The protein belongs to the profilin family. As to quaternary structure, occurs in many kinds of cells as a complex with monomeric actin in a 1:1 ratio.

The protein localises to the cytoplasm. The protein resides in the cytoskeleton. Binds to actin and affects the structure of the cytoskeleton. At high concentrations, profilin prevents the polymerization of actin, whereas it enhances it at low concentrations. By binding to PIP2, it inhibits the formation of IP3 and DG. This is Profilin from Prunus avium (Cherry).